We begin with the raw amino-acid sequence, 507 residues long: Maturase K (507 aa).

The protein belongs to the intron maturase 2 family. MatK subfamily.

The protein resides in the plastid. The protein localises to the chloroplast. Functionally, usually encoded in the trnK tRNA gene intron. Probably assists in splicing its own and other chloroplast group II introns. The sequence is that of Maturase K from Robinia pseudoacacia (Black locust).